A 297-amino-acid chain; its full sequence is Phosphatidylglycerol--prolipoprotein diacylglyceryl transferase (297 aa).

A run of 4 helical transmembrane segments spans residues 20–40 (FLTIRWYGLLISISVVIGLFI), 58–78 (ILPSLIISSIIGARAYYVIFE), 104–124 (IAIWQGGIAIHGGLIGGFLCI), and 133–153 (IHLKTFIDILIPSIILGQSIG). Arg154 is an a 1,2-diacyl-sn-glycero-3-phospho-(1'-sn-glycerol) binding site. Transmembrane regions (helical) follow at residues 194–214 (TFIYESLWNFLIFILLITIFY), 225–245 (GFISCLYLIGYSFGRFWIEGL), and 266–286 (AQFISIFLFSSGLIGLFFLRL).

It belongs to the Lgt family.

It localises to the cell inner membrane. It carries out the reaction L-cysteinyl-[prolipoprotein] + a 1,2-diacyl-sn-glycero-3-phospho-(1'-sn-glycerol) = an S-1,2-diacyl-sn-glyceryl-L-cysteinyl-[prolipoprotein] + sn-glycerol 1-phosphate + H(+). It participates in protein modification; lipoprotein biosynthesis (diacylglyceryl transfer). In terms of biological role, catalyzes the transfer of the diacylglyceryl group from phosphatidylglycerol to the sulfhydryl group of the N-terminal cysteine of a prolipoprotein, the first step in the formation of mature lipoproteins. In Prochlorococcus marinus subsp. pastoris (strain CCMP1986 / NIES-2087 / MED4), this protein is Phosphatidylglycerol--prolipoprotein diacylglyceryl transferase.